The primary structure comprises 195 residues: Early E3 22.2 kDa glycoprotein (195 aa).

Residues Asn20, Asn61, Asn76, Asn88, Asn126, and Asn139 are each glycosylated (N-linked (GlcNAc...) asparagine; by host).

The protein is Early E3 22.2 kDa glycoprotein of Canine adenovirus serotype 1 (strain Glaxo) (CAdV-1).